Reading from the N-terminus, the 120-residue chain is Large ribosomal subunit protein uL18 (120 aa).

The protein belongs to the universal ribosomal protein uL18 family. Part of the 50S ribosomal subunit; part of the 5S rRNA/L5/L18/L25 subcomplex. Contacts the 5S and 23S rRNAs.

In terms of biological role, this is one of the proteins that bind and probably mediate the attachment of the 5S RNA into the large ribosomal subunit, where it forms part of the central protuberance. This chain is Large ribosomal subunit protein uL18, found in Lawsonia intracellularis (strain PHE/MN1-00).